The primary structure comprises 98 residues: Citrate lyase acyl carrier protein (98 aa).

Residue Ser14 is modified to O-(phosphoribosyl dephospho-coenzyme A)serine.

The protein belongs to the CitD family. In terms of assembly, oligomer with a subunit composition of (alpha,beta,gamma)6.

The protein localises to the cytoplasm. In terms of biological role, covalent carrier of the coenzyme of citrate lyase. This chain is Citrate lyase acyl carrier protein, found in Albidiferax ferrireducens (strain ATCC BAA-621 / DSM 15236 / T118) (Rhodoferax ferrireducens).